Reading from the N-terminus, the 145-residue chain is Ribonuclease H (145 aa).

Positions 1-141 (MQEVTIYSDG…ADALANRGVE (141 aa)) constitute an RNase H type-1 domain. Mg(2+) contacts are provided by D9, E47, D69, and D133.

It belongs to the RNase H family. In terms of assembly, monomer. Mg(2+) is required as a cofactor.

It is found in the cytoplasm. It carries out the reaction Endonucleolytic cleavage to 5'-phosphomonoester.. Endonuclease that specifically degrades the RNA of RNA-DNA hybrids. This chain is Ribonuclease H, found in Cupriavidus necator (strain ATCC 17699 / DSM 428 / KCTC 22496 / NCIMB 10442 / H16 / Stanier 337) (Ralstonia eutropha).